Here is a 142-residue protein sequence, read N- to C-terminus: Protein archease (142 aa).

Residues Asp-12, Asp-141, and Ile-142 each coordinate Ca(2+).

Belongs to the archease family.

In terms of biological role, activates the tRNA-splicing ligase complex by facilitating the enzymatic turnover of catalytic subunit RtcB. Acts by promoting the guanylylation of RtcB, a key intermediate step in tRNA ligation. Can also alter the NTP specificity of RtcB such that ATP, dGTP or ITP is used efficiently. The chain is Protein archease from Pyrococcus furiosus (strain ATCC 43587 / DSM 3638 / JCM 8422 / Vc1).